The sequence spans 203 residues: Lectin (203 aa).

A signal peptide spans 1 to 20 (MINILHVIAGLALASVGVDA). The propeptide occupies 21-53 (RQVGVGADVLHAVENTIDSITGVEASHSALEVG).

Monomer.

Its function is as follows. N-acetyl-D-glucosamine-specific lectin. Specifically agglutinates rabbit erythrocytes. This is Lectin (UPL1) from Ulva pertusa (Sea lettuce).